Consider the following 209-residue polypeptide: MMRTNAGKETKGYNPAPADSGVPRKCVIIRKKKVGENMEKIELRYVAYSRIDKGSRSTTMEAINHAAAYFRERAGDLDYQDEPSSKSTCQKTFTVVKSEEKEKKKLEQCLPILLNIRARFAENEKNKSYSIHKRNQNGALKALCDEIVEESTYVLNNGHPVSSDLIKKIANINTLSRQVIANETKMENLVQDEFELAASKSKTSDKVSK.

Basic and acidic residues predominate over residues 1–11 (MMRTNAGKETK). Residues 1–20 (MMRTNAGKETKGYNPAPADS) form a disordered region.

This is an uncharacterized protein from Caenorhabditis elegans.